The following is a 297-amino-acid chain: ATP synthase subunit a (297 aa).

8 consecutive transmembrane segments (helical) span residues 38 to 58 (PLIP…IAIL), 77 to 97 (GYVL…VDLL), 107 to 127 (LFII…VGGI), 133 to 153 (SSTV…IMGV), 174 to 194 (TIPL…LLSI), 202 to 222 (VLAG…FFTL), 230 to 250 (VGLV…HVYF), and 252 to 272 (ILVS…YWSQ).

The protein belongs to the ATPase A chain family. In terms of assembly, F-type ATPases have 2 components, CF(1) - the catalytic core - and CF(0) - the membrane proton channel. CF(1) has five subunits: alpha(3), beta(3), gamma(1), delta(1), epsilon(1). CF(0) has three main subunits: a(1), b(2) and c(9-12). The alpha and beta chains form an alternating ring which encloses part of the gamma chain. CF(1) is attached to CF(0) by a central stalk formed by the gamma and epsilon chains, while a peripheral stalk is formed by the delta and b chains.

It is found in the cell membrane. Its function is as follows. Key component of the proton channel; it plays a direct role in the translocation of protons across the membrane. In Mycoplasmoides gallisepticum (strain R(low / passage 15 / clone 2)) (Mycoplasma gallisepticum), this protein is ATP synthase subunit a.